A 264-amino-acid polypeptide reads, in one-letter code: 3-methyl-2-oxobutanoate hydroxymethyltransferase (264 aa).

Mg(2+) contacts are provided by Asp-45 and Asp-84. Residues Asp-45–Ser-46, Asp-84, and Lys-112 contribute to the 3-methyl-2-oxobutanoate site. Glu-114 provides a ligand contact to Mg(2+). Catalysis depends on Glu-181, which acts as the Proton acceptor.

Belongs to the PanB family. Homodecamer; pentamer of dimers. Requires Mg(2+) as cofactor.

Its subcellular location is the cytoplasm. The catalysed reaction is 3-methyl-2-oxobutanoate + (6R)-5,10-methylene-5,6,7,8-tetrahydrofolate + H2O = 2-dehydropantoate + (6S)-5,6,7,8-tetrahydrofolate. The protein operates within cofactor biosynthesis; (R)-pantothenate biosynthesis; (R)-pantoate from 3-methyl-2-oxobutanoate: step 1/2. Functionally, catalyzes the reversible reaction in which hydroxymethyl group from 5,10-methylenetetrahydrofolate is transferred onto alpha-ketoisovalerate to form ketopantoate. The protein is 3-methyl-2-oxobutanoate hydroxymethyltransferase of Vibrio vulnificus (strain YJ016).